The primary structure comprises 673 residues: UvrABC system protein B (673 aa).

Residues 24-182 (EGVERNDPAQ…YSFVEILYNR (159 aa)) form the Helicase ATP-binding domain. Position 37-44 (37-44 (GVTGSGKT)) interacts with ATP. The Beta-hairpin motif lies at 90–113 (YYDYYQPEAFMPTSGLYIEKDLAI). One can recognise a Helicase C-terminal domain in the interval 429 to 591 (QIDDLLDEIQ…ITPITVNKSK (163 aa)). The UVR domain occupies 634 to 669 (TKMIDRAKKDMDKAAKDLDFVEAARYRDEMFALQKI).

The protein belongs to the UvrB family. In terms of assembly, forms a heterotetramer with UvrA during the search for lesions. Interacts with UvrC in an incision complex.

Its subcellular location is the cytoplasm. The UvrABC repair system catalyzes the recognition and processing of DNA lesions. A damage recognition complex composed of 2 UvrA and 2 UvrB subunits scans DNA for abnormalities. Upon binding of the UvrA(2)B(2) complex to a putative damaged site, the DNA wraps around one UvrB monomer. DNA wrap is dependent on ATP binding by UvrB and probably causes local melting of the DNA helix, facilitating insertion of UvrB beta-hairpin between the DNA strands. Then UvrB probes one DNA strand for the presence of a lesion. If a lesion is found the UvrA subunits dissociate and the UvrB-DNA preincision complex is formed. This complex is subsequently bound by UvrC and the second UvrB is released. If no lesion is found, the DNA wraps around the other UvrB subunit that will check the other stand for damage. This Cytophaga hutchinsonii (strain ATCC 33406 / DSM 1761 / CIP 103989 / NBRC 15051 / NCIMB 9469 / D465) protein is UvrABC system protein B.